Here is a 446-residue protein sequence, read N- to C-terminus: Transcription factor SOX-8 (446 aa).

Disordered stretches follow at residues 1–58 (MLDM…DPAE), 155–259 (AERL…RQNI), and 318–378 (HKSA…PFAG). The span at 40–53 (EGLGRAGVAVGGAR) shows a compositional bias: gly residues. Positions 58–100 (EAADERFPACIRDAVSQVLKGYDWSLVPMPVRGGGGGALKAKP) are dimerization (DIM). A DNA-binding region (HMG box) is located at residues 102-170 (VKRPMNAFMV…QHKKDHPDYK (69 aa)). Basic and acidic residues-rich tracts occupy residues 155 to 171 (AERL…DYKY), 210 to 219 (DGHHHGDHTG), and 242 to 253 (PELKLEGRRPVD). Residues 224 to 298 (PPTPPTTPKT…LPLGGPAPPE (75 aa)) are transactivation domain (TAM). The interval 335–446 (RPHIKTEQPS…QPVYTTLTRP (112 aa)) is transactivation domain (TAC). Residues 362 to 378 (SGQSSATPAAPAGPFAG) show a composition bias toward low complexity. Residues 400–408 (PGLYQYPCF) carry the 9aaTAD motif. A disordered region spans residues 425–446 (LPPAHSPTSHWDQPVYTTLTRP). The span at 430–446 (SPTSHWDQPVYTTLTRP) shows a compositional bias: polar residues.

The protein resides in the nucleus. Functionally, transcription factor that may play a role in central nervous system, limb and facial development. May be involved in male sex determination. Binds the consensus motif 5'-[AT][AT]CAA[AT]G-3'. The sequence is that of Transcription factor SOX-8 from Homo sapiens (Human).